Reading from the N-terminus, the 49-residue chain is Large ribosomal subunit protein bL33A (49 aa).

Belongs to the bacterial ribosomal protein bL33 family.

In Bacillus cytotoxicus (strain DSM 22905 / CIP 110041 / 391-98 / NVH 391-98), this protein is Large ribosomal subunit protein bL33A.